Consider the following 345-residue polypeptide: Ribosomal RNA small subunit methyltransferase H (345 aa).

Residues 47–49, aspartate 65, phenylalanine 92, aspartate 113, and glutamine 120 contribute to the S-adenosyl-L-methionine site; that span reads GGY. Residues 296–345 form a disordered region; sequence EPGPDEVAGNPRARSAKLRAAERTNAPAHPGGDLMGLLPAPPPQRHGRRR.

Belongs to the methyltransferase superfamily. RsmH family.

It localises to the cytoplasm. The enzyme catalyses cytidine(1402) in 16S rRNA + S-adenosyl-L-methionine = N(4)-methylcytidine(1402) in 16S rRNA + S-adenosyl-L-homocysteine + H(+). Functionally, specifically methylates the N4 position of cytidine in position 1402 (C1402) of 16S rRNA. The protein is Ribosomal RNA small subunit methyltransferase H of Xanthobacter autotrophicus (strain ATCC BAA-1158 / Py2).